The primary structure comprises 230 residues: 5'-methylthioadenosine/S-adenosylhomocysteine nucleosidase (230 aa).

Catalysis depends on Glu12, which acts as the Proton acceptor. Residues Gly78, Met153, and Met174–Glu175 contribute to the substrate site. Asp198 functions as the Proton donor in the catalytic mechanism.

It belongs to the PNP/UDP phosphorylase family. MtnN subfamily.

The enzyme catalyses S-adenosyl-L-homocysteine + H2O = S-(5-deoxy-D-ribos-5-yl)-L-homocysteine + adenine. The catalysed reaction is S-methyl-5'-thioadenosine + H2O = 5-(methylsulfanyl)-D-ribose + adenine. It carries out the reaction 5'-deoxyadenosine + H2O = 5-deoxy-D-ribose + adenine. It participates in amino-acid biosynthesis; L-methionine biosynthesis via salvage pathway; S-methyl-5-thio-alpha-D-ribose 1-phosphate from S-methyl-5'-thioadenosine (hydrolase route): step 1/2. Catalyzes the irreversible cleavage of the glycosidic bond in both 5'-methylthioadenosine (MTA) and S-adenosylhomocysteine (SAH/AdoHcy) to adenine and the corresponding thioribose, 5'-methylthioribose and S-ribosylhomocysteine, respectively. Also cleaves 5'-deoxyadenosine, a toxic by-product of radical S-adenosylmethionine (SAM) enzymes, into 5-deoxyribose and adenine. In Aeromonas salmonicida (strain A449), this protein is 5'-methylthioadenosine/S-adenosylhomocysteine nucleosidase.